The following is a 156-amino-acid chain: Ribonuclease pancreatic (156 aa).

The N-terminal stretch at 1-28 is a signal peptide; the sequence is MALEKSLALLPLLVLVLLVLGWVQPSLG. Over residues 33–43 the composition is skewed to basic and acidic residues; it reads AKKFQRQHMDS. A disordered region spans residues 33–52; that stretch reads AKKFQRQHMDSDGSPSSNPT. Residues lysine 35 and arginine 38 each contribute to the substrate site. Catalysis depends on histidine 40, which acts as the Proton acceptor. Disulfide bonds link cysteine 54–cysteine 112, cysteine 68–cysteine 123, cysteine 86–cysteine 138, and cysteine 93–cysteine 100. The N-linked (GlcNAc...) asparagine glycan is linked to asparagine 62. 69 to 73 lines the substrate pocket; sequence KPVNT. Asparagine 90 is a glycosylation site (N-linked (GlcNAc...) asparagine). 2 residues coordinate substrate: lysine 94 and arginine 113. Residue asparagine 116 is glycosylated (N-linked (GlcNAc...) asparagine). Histidine 147 acts as the Proton donor in catalysis.

This sequence belongs to the pancreatic ribonuclease family. As to quaternary structure, monomer. Interacts with and forms tight 1:1 complexes with RNH1. Dimerization of two such complexes may occur. Interaction with RNH1 inhibits this protein.

It is found in the secreted. The enzyme catalyses an [RNA] containing cytidine + H2O = an [RNA]-3'-cytidine-3'-phosphate + a 5'-hydroxy-ribonucleotide-3'-[RNA].. It catalyses the reaction an [RNA] containing uridine + H2O = an [RNA]-3'-uridine-3'-phosphate + a 5'-hydroxy-ribonucleotide-3'-[RNA].. Functionally, endonuclease that catalyzes the cleavage of RNA on the 3' side of pyrimidine nucleotides. Acts on single-stranded and double-stranded RNA. The protein is Ribonuclease pancreatic (RNASE1) of Ateles geoffroyi (Black-handed spider monkey).